Here is a 1416-residue protein sequence, read N- to C-terminus: 1-phosphatidylinositol 4,5-bisphosphate phosphodiesterase eta-2 (1416 aa).

The interval 1 to 155 (MSGPWPSPDS…WVTGLRYLMA (155 aa)) is necessary for plasma membrane localization. In terms of domain architecture, PH spans 47–155 (GAMQEGMQMV…WVTGLRYLMA (109 aa)). 2 consecutive EF-hand domains span residues 169-204 (TRDQWLKQTFDEADKNGDGSLSIGEVLQLLHKLNVN) and 205-241 (LPRQRVKQMFREADTDDHQGTLGFEEFCAFYKMMSTR). Ca(2+) is bound by residues Asp-182, Asn-184, Asp-186, Ser-188, and Glu-193. The region spanning 326-471 (QDMTQPLSHY…LKGKILVKGK (146 aa)) is the PI-PLC X-box domain. Residue His-341 is part of the active site. Ca(2+) contacts are provided by Asn-342, Glu-371, and Asp-373. Residue His-385 is part of the active site. Glu-420 contacts Ca(2+). Substrate is bound by residues Lys-469 and Lys-471. 2 positions are modified to phosphoserine: Ser-487 and Ser-491. The segment at 535–620 (DPNNFSVSTL…RGATRQKKTM (86 aa)) is disordered. Residues 537 to 546 (NNFSVSTLSP) are compositionally biased toward polar residues. Basic residues predominate over residues 581–592 (SRRKKKGSKLKK). A phosphoserine mark is found at Ser-595 and Ser-605. Positions 626 to 740 (LSDLVKYTKS…GYVLKPGCMC (115 aa)) constitute a PI-PLC Y-box domain. The substrate site is built by Ser-653 and Arg-680. The C2 domain occupies 740 to 869 (CQGVFNPNSE…PGYRHVYLEG (130 aa)). Ile-784, Asp-786, Asp-810, Asp-839, His-840, and Asp-841 together coordinate Ca(2+). Disordered regions lie at residues 905-1109 (GSLD…GGWR), 1121-1222 (YSDA…LQPR), and 1315-1405 (ITSP…GPAS). Pro residues predominate over residues 1011-1021 (APGPGPPPPAA). The span at 1073–1083 (GSQTDGRSQPR) shows a compositional bias: polar residues. Over residues 1143 to 1166 (VSSSSSMSSSDTVIDLSLPSLGLG) the composition is skewed to low complexity. A compositionally biased stretch (polar residues) spans 1199-1208 (KSKSNPNLRA). Over residues 1324–1333 (AGEGVAGGPG) the composition is skewed to gly residues.

Ca(2+) serves as cofactor. As to expression, expressed in retina and kidney.

It localises to the cytoplasm. The protein localises to the cell membrane. The enzyme catalyses a 1,2-diacyl-sn-glycero-3-phospho-(1D-myo-inositol-4,5-bisphosphate) + H2O = 1D-myo-inositol 1,4,5-trisphosphate + a 1,2-diacyl-sn-glycerol + H(+). Activity is stimulated by GNB1:GNG2. Its function is as follows. The production of the second messenger molecules diacylglycerol (DAG) and inositol 1,4,5-trisphosphate (IP3) is mediated by activated phosphatidylinositol-specific phospholipase C enzymes. This phospholipase activity is very sensitive to calcium. May be important for formation and maintenance of the neuronal network in the postnatal brain. This Homo sapiens (Human) protein is 1-phosphatidylinositol 4,5-bisphosphate phosphodiesterase eta-2.